We begin with the raw amino-acid sequence, 377 residues long: Aspartate aminotransferase (377 aa).

Glycine 37, tryptophan 123, and asparagine 173 together coordinate L-aspartate. The residue at position 234 (lysine 234) is an N6-(pyridoxal phosphate)lysine. Arginine 353 contributes to the L-aspartate binding site.

This sequence belongs to the class-I pyridoxal-phosphate-dependent aminotransferase family. As to quaternary structure, homodimer. It depends on pyridoxal 5'-phosphate as a cofactor.

The protein localises to the cytoplasm. The enzyme catalyses L-aspartate + 2-oxoglutarate = oxaloacetate + L-glutamate. This Thermotoga maritima (strain ATCC 43589 / DSM 3109 / JCM 10099 / NBRC 100826 / MSB8) protein is Aspartate aminotransferase (aspC).